The following is a 144-amino-acid chain: Large ribosomal subunit protein uL15 (144 aa).

Residues 1 to 54 (MRLNTLSPAAGAKHAPKRVGRGMGSGLGKTAGRGHKGQKSRSGGGVRPGFEGGQ) are disordered. Composition is skewed to gly residues over residues 21 to 31 (RGMGSGLGKTA) and 42 to 52 (SGGGVRPGFEG).

It belongs to the universal ribosomal protein uL15 family. Part of the 50S ribosomal subunit.

Binds to the 23S rRNA. The protein is Large ribosomal subunit protein uL15 of Shewanella oneidensis (strain ATCC 700550 / JCM 31522 / CIP 106686 / LMG 19005 / NCIMB 14063 / MR-1).